Reading from the N-terminus, the 113-residue chain is Vitelline membrane protein Vm32E (113 aa).

The first 17 residues, 1-17, serve as a signal peptide directing secretion; the sequence is MKIVAFTLVAFVALAGA. Positions 33–70 constitute a VM domain; that stretch reads GYPAPPCPTNYLFSCQPNLAPVPCAQQAPAYGSAGAYT.

This sequence belongs to the vitelline membrane family.

It is found in the secreted. Major early eggshell protein. In Drosophila erecta (Fruit fly), this protein is Vitelline membrane protein Vm32E.